We begin with the raw amino-acid sequence, 695 residues long: DNA ligase (695 aa).

NAD(+) contacts are provided by residues 44-48 (DAEYD), 93-94 (SL), and E124. K126 acts as the N6-AMP-lysine intermediate in catalysis. Residues R147, E187, K304, and K328 each contribute to the NAD(+) site. Positions 422, 425, 440, and 445 each coordinate Zn(2+). In terms of domain architecture, BRCT spans 606-695 (TVQGPLAGKT…GIEVEAAARS (90 aa)).

The protein belongs to the NAD-dependent DNA ligase family. LigA subfamily. Mg(2+) is required as a cofactor. Requires Mn(2+) as cofactor.

The catalysed reaction is NAD(+) + (deoxyribonucleotide)n-3'-hydroxyl + 5'-phospho-(deoxyribonucleotide)m = (deoxyribonucleotide)n+m + AMP + beta-nicotinamide D-nucleotide.. DNA ligase that catalyzes the formation of phosphodiester linkages between 5'-phosphoryl and 3'-hydroxyl groups in double-stranded DNA using NAD as a coenzyme and as the energy source for the reaction. It is essential for DNA replication and repair of damaged DNA. In Thermomicrobium roseum (strain ATCC 27502 / DSM 5159 / P-2), this protein is DNA ligase.